A 570-amino-acid chain; its full sequence is 2-isopropylmalate synthase (570 aa).

Residues 31–305 (PIWMSTDLRD…DPELDFSHIN (275 aa)) form the Pyruvate carboxyltransferase domain. Mg(2+) is bound by residues Asp-40, His-244, His-246, and Asn-280. The regulatory domain stretch occupies residues 437–570 (SDGAIGYVSH…RRSSAQATVA (134 aa)).

The protein belongs to the alpha-IPM synthase/homocitrate synthase family. LeuA type 2 subfamily. Homodimer. The cofactor is Mg(2+).

The protein resides in the cytoplasm. The catalysed reaction is 3-methyl-2-oxobutanoate + acetyl-CoA + H2O = (2S)-2-isopropylmalate + CoA + H(+). The protein operates within amino-acid biosynthesis; L-leucine biosynthesis; L-leucine from 3-methyl-2-oxobutanoate: step 1/4. Catalyzes the condensation of the acetyl group of acetyl-CoA with 3-methyl-2-oxobutanoate (2-ketoisovalerate) to form 3-carboxy-3-hydroxy-4-methylpentanoate (2-isopropylmalate). The protein is 2-isopropylmalate synthase of Ralstonia pickettii (strain 12J).